The chain runs to 197 residues: Ubiquitin-conjugating enzyme E2 T (197 aa).

A UBC core domain is found at 2 to 152 (QRASRLKREL…ARQWTEKHAR (151 aa)). Cys-86 serves as the catalytic Glycyl thioester intermediate. Residues Lys-91 and Lys-182 each participate in a glycyl lysine isopeptide (Lys-Gly) (interchain with G-Cter in ubiquitin) cross-link. The interval 149-197 (KHARQKQKADEEEMLDNLPEAGDSRVHNSTQKRKASQLVGIEKKFHPDV) is disordered. The residue at position 184 (Ser-184) is a Phosphoserine. Residues Lys-191 and Lys-192 each participate in a glycyl lysine isopeptide (Lys-Gly) (interchain with G-Cter in SUMO2) cross-link.

The protein belongs to the ubiquitin-conjugating enzyme family. As to quaternary structure, directly interacts with FANCL. Interacts with BRCA1. Post-translationally, auto-ubiquitinated. Effects of auto-monoubiquitination at Lys-91 and Lys-182 are unclear: according to a report, monoubiquitination inactivates E2 enzyme activity. In contrast, according to another report, autoubiquitination does not affect E2 enzyme activity.

It is found in the nucleus. The enzyme catalyses S-ubiquitinyl-[E1 ubiquitin-activating enzyme]-L-cysteine + [E2 ubiquitin-conjugating enzyme]-L-cysteine = [E1 ubiquitin-activating enzyme]-L-cysteine + S-ubiquitinyl-[E2 ubiquitin-conjugating enzyme]-L-cysteine.. The protein operates within protein modification; protein ubiquitination. In terms of biological role, accepts ubiquitin from the E1 complex and catalyzes its covalent attachment to other proteins. Catalyzes monoubiquitination. Involved in mitomycin-C (MMC)-induced DNA repair. Acts as a specific E2 ubiquitin-conjugating enzyme for the Fanconi anemia complex by associating with E3 ubiquitin-protein ligase FANCL and catalyzing monoubiquitination of FANCD2, a key step in the DNA damage pathway. Also mediates monoubiquitination of FANCL and FANCI. May contribute to ubiquitination and degradation of BRCA1. In vitro able to promote polyubiquitination using all 7 ubiquitin Lys residues, but may prefer 'Lys-11'-, 'Lys-27'-, 'Lys-48'- and 'Lys-63'-linked polyubiquitination. This chain is Ubiquitin-conjugating enzyme E2 T (UBE2T), found in Homo sapiens (Human).